A 96-amino-acid chain; its full sequence is Large ribosomal subunit protein bL25 (96 aa).

Belongs to the bacterial ribosomal protein bL25 family. Part of the 50S ribosomal subunit; part of the 5S rRNA/L5/L18/L25 subcomplex. Contacts the 5S rRNA. Binds to the 5S rRNA independently of L5 and L18.

Functionally, this is one of the proteins that binds to the 5S RNA in the ribosome where it forms part of the central protuberance. This chain is Large ribosomal subunit protein bL25, found in Francisella tularensis subsp. holarctica (strain FTNF002-00 / FTA).